The chain runs to 330 residues: MEYYHHSINKMAMFMVILVLAIDVTMVLGQGTRVGFYSSTCPRAESIVQSTVRAHFQSDPTVAPGILRMHFHDCFVLGCDGSILIEGSDAERTAIPNRNLKGFDVIEDAKTQIEAICPGVVSCADILALAARDSVVATRGLTWSVPTGRRDGRVSRAADAGDLPAFFDSVDIQKRKFLTKGLNTQDLVALTGAHTIGTAGCAVIRDRLFNFNSTGGPDPSIDATFLPQLRALCPQNGDASRRVGLDTGSVNNFDTSYFSNLRNGRGVLESDQKLWTDASTQVFVQRFLGIRGLLGLTFGVEFGRSMVKMSNIEVKTGTNGEIRKVCSAIN.

Positions 1–29 (MEYYHHSINKMAMFMVILVLAIDVTMVLG) are cleaved as a signal peptide. Gln30 carries the post-translational modification Pyrrolidone carboxylic acid. Cystine bridges form between Cys41/Cys117, Cys74/Cys79, Cys123/Cys326, and Cys201/Cys233. Residue His72 is the Proton acceptor of the active site. Ca(2+)-binding residues include Asp73, Val76, Gly78, Asp80, and Ser82. Pro164 serves as a coordination point for substrate. A heme b-binding site is contributed by His194. Thr195 contacts Ca(2+). The N-linked (GlcNAc...) asparagine glycan is linked to Asn212. Ca(2+)-binding residues include Asp246 and Asp254.

It belongs to the peroxidase family. Classical plant (class III) peroxidase subfamily. The cofactor is Ca(2+). Heme b is required as a cofactor. In terms of tissue distribution, expressed at a high level in roots and at a trace level in lower leaves. Not expressed in upper leaves, stems, flowers, seeds and shoot apices.

It is found in the secreted. The enzyme catalyses 2 a phenolic donor + H2O2 = 2 a phenolic radical donor + 2 H2O. Functionally, removal of H(2)O(2), oxidation of toxic reductants, biosynthesis and degradation of lignin, suberization, auxin catabolism, response to environmental stresses such as wounding, pathogen attack and oxidative stress. These functions might be dependent on each isozyme/isoform in each plant tissue. Can use NADH, NADPH and monolignols as substrates. This Nicotiana tabacum (Common tobacco) protein is Peroxidase N1.